The primary structure comprises 178 residues: uncharacterized protein (178 aa).

Disordered stretches follow at residues 89–115 and 136–178; these read NEEQ…RLSI and DMPT…EIKA. The span at 98–109 shows a compositional bias: low complexity; sequence ASHGSTSSATST. A compositionally biased stretch (acidic residues) spans 167 to 178; that stretch reads DSDEEEEEEIKA.

Its subcellular location is the cytoplasm. It is found in the nucleus. This is an uncharacterized protein from Schizosaccharomyces pombe (strain 972 / ATCC 24843) (Fission yeast).